A 539-amino-acid chain; its full sequence is Chaperonin GroEL (539 aa).

ATP contacts are provided by residues 29 to 32, 86 to 90, Gly-413, 476 to 478, and Asp-492; these read TLGP, DGTTT, and NAA.

This sequence belongs to the chaperonin (HSP60) family. As to quaternary structure, forms a cylinder of 14 subunits composed of two heptameric rings stacked back-to-back. Interacts with the co-chaperonin GroES.

It localises to the cytoplasm. The catalysed reaction is ATP + H2O + a folded polypeptide = ADP + phosphate + an unfolded polypeptide.. Together with its co-chaperonin GroES, plays an essential role in assisting protein folding. The GroEL-GroES system forms a nano-cage that allows encapsulation of the non-native substrate proteins and provides a physical environment optimized to promote and accelerate protein folding. The chain is Chaperonin GroEL from Geobacillus sp. (strain WCH70).